The sequence spans 411 residues: RNA binding protein fox-1 homolog 2 (411 aa).

A disordered region spans residues 16 to 175 (TRGTKRESDQ…SETKASPKRL (160 aa)). Composition is skewed to polar residues over residues 58–83 (PVSQ…TPDT) and 99–119 (NGLS…QSTE). Residues 135–165 (SAPATSTANASSTTDGSQTEGQQSQSQNNEN) are compositionally biased toward low complexity. Residues 173-249 (KRLHVSNIPF…RKIEVNNATA (77 aa)) form the RRM domain.

Interacts with papd4/gld2.

The protein resides in the nucleus. Its subcellular location is the cytoplasm. Its function is as follows. RNA-binding protein that regulates alternative splicing events by binding to 5'-UGCAUGU-3' elements. Regulates alternative splicing of tissue-specific exons. This chain is RNA binding protein fox-1 homolog 2 (rbfox2), found in Xenopus laevis (African clawed frog).